The primary structure comprises 317 residues: 2,3-dihydroxyphenylpropionate/2,3-dihydroxicinnamic acid 1,2-dioxygenase (317 aa).

His-115 (proton donor) is an active-site residue. The active-site Proton acceptor is the His-179.

This sequence belongs to the LigB/MhpB extradiol dioxygenase family. Homotetramer. It depends on Fe(2+) as a cofactor.

The enzyme catalyses 3-(2,3-dihydroxyphenyl)propanoate + O2 = (2Z,4E)-2-hydroxy-6-oxonona-2,4-dienedioate + H(+). It catalyses the reaction (2E)-3-(2,3-dihydroxyphenyl)prop-2-enoate + O2 = (2Z,4E,7E)-2-hydroxy-6-oxonona-2,4,7-trienedioate + H(+). The protein operates within aromatic compound metabolism; 3-phenylpropanoate degradation. Its function is as follows. Catalyzes the non-heme iron(II)-dependent oxidative cleavage of 2,3-dihydroxyphenylpropionic acid and 2,3-dihydroxicinnamic acid into 2-hydroxy-6-ketononadienedioate and 2-hydroxy-6-ketononatrienedioate, respectively. The sequence is that of 2,3-dihydroxyphenylpropionate/2,3-dihydroxicinnamic acid 1,2-dioxygenase from Paraburkholderia phymatum (strain DSM 17167 / CIP 108236 / LMG 21445 / STM815) (Burkholderia phymatum).